We begin with the raw amino-acid sequence, 367 residues long: Ribosomal RNA large subunit methyltransferase M (367 aa).

S-adenosyl-L-methionine-binding positions include Ser-188, 221–224, Asp-240, Asp-260, and Asp-277; that span reads CPGG. The active-site Proton acceptor is Lys-306.

The protein belongs to the class I-like SAM-binding methyltransferase superfamily. RNA methyltransferase RlmE family. RlmM subfamily. In terms of assembly, monomer.

Its subcellular location is the cytoplasm. It carries out the reaction cytidine(2498) in 23S rRNA + S-adenosyl-L-methionine = 2'-O-methylcytidine(2498) in 23S rRNA + S-adenosyl-L-homocysteine + H(+). In terms of biological role, catalyzes the 2'-O-methylation at nucleotide C2498 in 23S rRNA. In Serratia proteamaculans (strain 568), this protein is Ribosomal RNA large subunit methyltransferase M.